We begin with the raw amino-acid sequence, 156 residues long: Acyl carrier protein, mitochondrial (156 aa).

The transit peptide at 1–68 directs the protein to the mitochondrion; sequence MASRVLSAYV…GRVTQLCRQY (68 aa). Residues 77–152 enclose the Carrier domain; the sequence is EGIQDRVLYV…EIVDYIADKK (76 aa). Lys-88 bears the N6-acetyllysine mark. Ser-112 carries the post-translational modification O-(pantetheine 4'-phosphoryl)serine.

Belongs to the acyl carrier protein (ACP) family. As to quaternary structure, mammalian complex I is composed of 45 different subunits. Interacts with ETFRF1. Identified in a complex composed of MALSU1, MIEF1 upstream open reading frame protein and NDUFAB1; within the trimeric complex, MIEF1 upstream open reading frame protein functions as a bridging scaffold that interacts with MALSU1 on one side, and with NDUFAB1 on the other side. The complex interacts with the mitochondrial large ribosomal subunit. Interacts with alpha-1-microglobulin chain; this interaction is required for the maintenance of mitochondrial redox homeostasis. Component of the mitochondrial core iron-sulfur cluster (ISC) complex composed of NFS1, LYRM4, NDUFAB1, ISCU, FXN, and FDX2; this complex is a heterohexamer containing two copies of each monomer. Component of the cyteine desulfurase complex composed of NFS1, LYRM4 and NDUFAB1; this complex contributes to the stability and cysteine desulfurase activity of NFS1. In terms of processing, phosphopantetheinylation at Ser-112 is essential for interactions with LYR motif-containing proteins.

It is found in the mitochondrion. Its function is as follows. Carrier of the growing fatty acid chain in fatty acid biosynthesis. Accessory and non-catalytic subunit of the mitochondrial membrane respiratory chain NADH dehydrogenase (Complex I), which functions in the transfer of electrons from NADH to the respiratory chain. Accessory protein, of the core iron-sulfur cluster (ISC) assembly complex, that regulates, in association with LYRM4, the stability and the cysteine desulfurase activity of NFS1 and participates in the [2Fe-2S] clusters assembly on the scaffolding protein ISCU. The core iron-sulfur cluster (ISC) assembly complex is involved in the de novo synthesis of a [2Fe-2S] cluster, the first step of the mitochondrial iron-sulfur protein biogenesis. This process is initiated by the cysteine desulfurase complex (NFS1:LYRM4:NDUFAB1) that produces persulfide which is delivered on the scaffold protein ISCU in a FXN-dependent manner. Then this complex is stabilized by FDX2 which provides reducing equivalents to accomplish the [2Fe-2S] cluster assembly. Finally, the [2Fe-2S] cluster is transferred from ISCU to chaperone proteins, including HSCB, HSPA9 and GLRX5. This chain is Acyl carrier protein, mitochondrial, found in Pongo pygmaeus (Bornean orangutan).